The primary structure comprises 263 residues: Undecaprenyl-diphosphatase (263 aa).

6 helical membrane-spanning segments follow: residues 40 to 60 (PGVL…LVYF), 87 to 107 (LLII…DFFV), 109 to 129 (AFHN…LLFF), 186 to 206 (FSFL…LLEW), 219 to 239 (AGAV…MGVV), and 243 to 263 (RLYA…AISS).

Belongs to the UppP family.

Its subcellular location is the cell inner membrane. It catalyses the reaction di-trans,octa-cis-undecaprenyl diphosphate + H2O = di-trans,octa-cis-undecaprenyl phosphate + phosphate + H(+). Functionally, catalyzes the dephosphorylation of undecaprenyl diphosphate (UPP). Confers resistance to bacitracin. The protein is Undecaprenyl-diphosphatase of Syntrophotalea carbinolica (strain DSM 2380 / NBRC 103641 / GraBd1) (Pelobacter carbinolicus).